The sequence spans 41 residues: MKNFTTYLSTAPVVATGWFIVTAALLIEINRFFPDPLVFSF.

A helical transmembrane segment spans residues 7 to 27 (YLSTAPVVATGWFIVTAALLI).

It belongs to the PsaJ family.

The protein localises to the plastid. Its subcellular location is the chloroplast thylakoid membrane. Its function is as follows. May help in the organization of the PsaE and PsaF subunits. This is Photosystem I reaction center subunit IX from Tetradesmus obliquus (Green alga).